Reading from the N-terminus, the 2005-residue chain is MARSVLVPPGPDSFRFFTRESLAAIEQRIAEEKAKRPKQERKDEDDENGPKPNSDLEAGKSLPFIYGDIPPEMVSEPLEDLDPYYINKKTFIVLNKGKAISRFSATSALYILTPFNPIRKLAIKILVHSLFNVLIMCTILTNCVFMTMSNPPDWTKNVEYTFTGIYTFESLIKILARGFCLEDFTFLRNPWNWLDFTVITFAYVTEFVNLGNVSALRTFRVLRALKTISVIPGLKTIVGALIQSVKKLSDVMILTVFCLSVFALIGLQLFMGNLRNKCLQWPPDNSTFEINITSFFNNSLDWNGTAFNRTVNMFNWDEYIEDKSHFYFLEGQNDALLCGNSSDAGQCPEGYICVKAGRNPNYGYTSFDTFSWAFLSLFRLMTQDFWENLYQLTLRAAGKTYMIFFVLVIFLGSFYLINLILAVVAMAYEEQNQATLEEAEQKEAEFQQMLEQLKKQQEEAQAAAAAASAESRDFSGAGGIGVFSESSSVASKLSSKSEKELKNRRKKKKQKEQAGEEEKEDAVRKSASEDSIRKKGFQFSLEGSRLTYEKRFSSPHQSLLSIRGSLFSPRRNSRASLFNFKGRVKDIGSENDFADDEHSTFEDNDSRRDSLFVPHRHGERRPSNVSQASRASRGIPTLPMNGKMHSAVDCNGVVSLVGGPSALTSPVGQLLPEGTTTETEIRKRRSSSYHVSMDLLEDPSRQRAMSMASILTNTMEELEESRQKCPPCWYKFANMCLIWDCCKPWLKVKHVVNLVVMDPFVDLAITICIVLNTLFMAMEHYPMTEQFSSVLSVGNLVFTGIFTAEMFLKIIAMDPYYYFQEGWNIFDGFIVSLSLMELGLANVEGLSVLRSFRLLRVFKLAKSWPTLNMLIKIIGNSVGALGNLTLVLAIIVFIFAVVGMQLFGKSYKECVCKISNDCELPRWHMHHFFHSFLIVFRVLCGEWIETMWDCMEVAGQTMCLTVFMMVMVIGNLVVLNLFLALLLSSFSSDNLAATDDDNEMNNLQIAVGRMQKGIDFVKRKIREFIQKAFVRKQKALDEIKPLEDLNNKKDSCISNHTTIEIGKDLNYLKDGNGTTSGIGSSVEKYVVDESDYMSFINNPSLTVTVPIALGESDFENLNTEEFSSESDMEESKEKLNATSSSEGSTVDIGAPAEGEQPEAEPEESLEPEACFTEDCVRKFKCCQISIEEGKGKLWWNLRKTCYKIVEHNWFETFIVFMILLSSGALAFEDIYIEQRKTIKTMLEYADKVFTYIFILEMLLKWVAYGFQMYFTNAWCWLDFLIVDVSLVSLTANALGYSELGAIKSLRTLRALRPLRALSRFEGMRVVVNALLGAIPSIMNVLLVCLIFWLIFSIMGVNLFAGKFYHCINYTTGEMFDVSVVNNYSECQALIESNQTARWKNVKVNFDNVGLGYLSLLQVATFKGWMDIMYAAVDSRNVELQPKYEDNLYMYLYFVIFIIFGSFFTLNLFIGVIIDNFNQQKKKFGGQDIFMTEEQKKYYNAMKKLGSKKPQKPIPRPANKFQGMVFDFVTKQVFDISIMILICLNMVTMMVETDDQSQEMTNILYWINLVFIVLFTGECVLKLISLRHYYFTIGWNIFDFVVVILSIVGMFLAELIEKYFVSPTLFRVIRLARIGRILRLIKGAKGIRTLLFALMMSLPALFNIGLLLFLVMFIYAIFGMSNFAYVKREVGIDDMFNFETFGNSMICLFQITTSAGWDGLLAPILNSGPPDCDPEKDHPGSSVKGDCGNPSVGIFFFVSYIIISFLVVVNMYIAVILENFSVATEESAEPLSEDDFEMFYEVWEKFDPDATQFIEFCKLSDFAAALDPPLLIAKPNKVQLIAMDLPMVSGDRIHCLDILFAFTKRVLGESGEMDALRIQMEERFMASNPSKVSYEPITTTLKRKQEEVSAIVIQRAYRRYLLKQKVKKVSSIYKKDKGKEDEGTPIKEDIITDKLNENSTPEKTDVTPSTTSPPSYDSVTKPEKEKFEKDKSEKEDKGKDIRESKK.

The Cytoplasmic segment spans residues 1–129 (MARSVLVPPG…KLAIKILVHS (129 aa)). Ser4 is modified (phosphoserine). Residues 28 to 61 (RIAEEKAKRPKQERKDEDDENGPKPNSDLEAGKS) form a disordered region. Residue Lys38 forms a Glycyl lysine isopeptide (Lys-Gly) (interchain with G-Cter in SUMO1) linkage. The I repeat unit spans residues 111–456 (ILTPFNPIRK…QQMLEQLKKQ (346 aa)). A helical transmembrane segment spans residues 130 to 148 (LFNVLIMCTILTNCVFMTM). At 149 to 155 (SNPPDWT) the chain is on the extracellular side. Residues 156-176 (KNVEYTFTGIYTFESLIKILA) form a helical membrane-spanning segment. At 177–190 (RGFCLEDFTFLRNP) the chain is on the cytoplasmic side. Residues 191–208 (WNWLDFTVITFAYVTEFV) form a helical membrane-spanning segment. Residues 209–214 (NLGNVS) are Extracellular-facing. The N-linked (GlcNAc...) asparagine glycan is linked to Asn212. A helical transmembrane segment spans residues 215 to 231 (ALRTFRVLRALKTISVI). Residues 232 to 250 (PGLKTIVGALIQSVKKLSD) lie on the Cytoplasmic side of the membrane. The helical transmembrane segment at 251 to 270 (VMILTVFCLSVFALIGLQLF) threads the bilayer. Over 271–369 (MGNLRNKCLQ…PNYGYTSFDT (99 aa)) the chain is Extracellular. Cys278 and Cys338 form a disulfide bridge. N-linked (GlcNAc...) asparagine glycosylation is found at Asn285, Asn291, Asn297, Asn303, Asn308, and Asn340. Positions 370-394 (FSWAFLSLFRLMTQDFWENLYQLTL) form an intramembrane region, pore-forming. The Extracellular portion of the chain corresponds to 395 to 401 (RAAGKTY). A helical membrane pass occupies residues 402–422 (MIFFVLVIFLGSFYLINLILA). The Cytoplasmic portion of the chain corresponds to 423 to 759 (VVAMAYEEQN…HVVNLVVMDP (337 aa)). A phosphoserine mark is found at Ser468, Ser471, Ser484, Ser526, Ser528, Ser531, Ser553, Ser554, and Ser558. The segment at 494–529 (SSKSEKELKNRRKKKKQKEQAGEEEKEDAVRKSASE) is disordered. Basic and acidic residues predominate over residues 511–529 (KEQAGEEEKEDAVRKSASE). Ser554 is subject to Phosphoserine; by PKC; in vitro. Residues Ser573 and Ser576 each carry the phosphoserine; by PKC; in vitro modification. Phosphoserine occurs at positions 589, 610, 623, 687, 688, and 721. Residues 591 to 634 (NDFADDEHSTFEDNDSRRDSLFVPHRHGERRPSNVSQASRASRG) are disordered. Residues 596–610 (DEHSTFEDNDSRRDS) are compositionally biased toward basic and acidic residues. The stretch at 741–1013 (CCKPWLKVKH…QIAVGRMQKG (273 aa)) is one II repeat. A helical membrane pass occupies residues 760–778 (FVDLAITICIVLNTLFMAM). Topologically, residues 779–789 (EHYPMTEQFSS) are extracellular. The chain crosses the membrane as a helical span at residues 790 to 809 (VLSVGNLVFTGIFTAEMFLK). Over 810–823 (IIAMDPYYYFQEGW) the chain is Cytoplasmic. The chain crosses the membrane as a helical span at residues 824-843 (NIFDGFIVSLSLMELGLANV). The Extracellular portion of the chain corresponds to 844–845 (EG). The helical transmembrane segment at 846–863 (LSVLRSFRLLRVFKLAKS) threads the bilayer. At 864 to 879 (WPTLNMLIKIIGNSVG) the chain is on the cytoplasmic side. The helical transmembrane segment at 880-898 (ALGNLTLVLAIIVFIFAVV) threads the bilayer. At 899 to 927 (GMQLFGKSYKECVCKISNDCELPRWHMHH) the chain is on the extracellular side. A disulfide bridge connects residues Cys912 and Cys918. Positions 917–918 (DC) are binds SCN2B. Positions 928-948 (FFHSFLIVFRVLCGEWIETMW) form an intramembrane region, pore-forming. Residues 949–961 (DCMEVAGQTMCLT) are Extracellular-facing. Cys950 and Cys959 are disulfide-bonded. A helical membrane pass occupies residues 962–982 (VFMMVMVIGNLVVLNLFLALL). The Cytoplasmic segment spans residues 983 to 1209 (LSSFSSDNLA…TCYKIVEHNW (227 aa)). Residues 1120-1166 (EEFSSESDMEESKEKLNATSSSEGSTVDIGAPAEGEQPEAEPEESLE) form a disordered region. Residues 1155 to 1166 (EQPEAEPEESLE) show a composition bias toward acidic residues. The stretch at 1190 to 1504 (KGKLWWNLRK…KKYYNAMKKL (315 aa)) is one III repeat. Residues 1210 to 1227 (FETFIVFMILLSSGALAF) traverse the membrane as a helical segment. The Extracellular segment spans residues 1228–1240 (EDIYIEQRKTIKT). The helical transmembrane segment at 1241–1259 (MLEYADKVFTYIFILEMLL) threads the bilayer. The Cytoplasmic segment spans residues 1260 to 1273 (KWVAYGFQMYFTNA). Residues 1274-1292 (WCWLDFLIVDVSLVSLTAN) form a helical membrane-spanning segment. Over 1293 to 1300 (ALGYSELG) the chain is Extracellular. A helical membrane pass occupies residues 1301–1319 (AIKSLRTLRALRPLRALSR). Topologically, residues 1320 to 1336 (FEGMRVVVNALLGAIPS) are cytoplasmic. Residues 1337–1356 (IMNVLLVCLIFWLIFSIMGV) form a helical membrane-spanning segment. Residues 1357–1408 (NLFAGKFYHCINYTTGEMFDVSVVNNYSECQALIESNQTARWKNVKVNFDNV) are Extracellular-facing. Cys1366 and Cys1386 form a disulfide bridge. Asn1368, Asn1382, and Asn1393 each carry an N-linked (GlcNAc...) asparagine glycan. Positions 1409–1430 (GLGYLSLLQVATFKGWMDIMYA) form an intramembrane region, pore-forming. The Extracellular portion of the chain corresponds to 1431 to 1447 (AVDSRNVELQPKYEDNL). The helical transmembrane segment at 1448 to 1469 (YMYLYFVIFIIFGSFFTLNLFI) threads the bilayer. The Cytoplasmic portion of the chain corresponds to 1470–1532 (GVIIDNFNQQ…MVFDFVTKQV (63 aa)). At Ser1506 the chain carries Phosphoserine; by PKC. The stretch at 1513–1811 (IPRPANKFQG…WEKFDPDATQ (299 aa)) is one IV repeat. A helical transmembrane segment spans residues 1533-1550 (FDISIMILICLNMVTMMV). Residues 1551-1561 (ETDDQSQEMTN) are Extracellular-facing. A helical transmembrane segment spans residues 1562–1580 (ILYWINLVFIVLFTGECVL). The Cytoplasmic portion of the chain corresponds to 1581-1592 (KLISLRHYYFTI). The helical transmembrane segment at 1593 to 1610 (GWNIFDFVVVILSIVGMF) threads the bilayer. The Extracellular portion of the chain corresponds to 1611-1623 (LAELIEKYFVSPT). Residues 1624-1640 (LFRVIRLARIGRILRLI) traverse the membrane as a helical segment. At 1641-1659 (KGAKGIRTLLFALMMSLPA) the chain is on the cytoplasmic side. The chain crosses the membrane as a helical span at residues 1660-1677 (LFNIGLLLFLVMFIYAIF). Residues 1678–1699 (GMSNFAYVKREVGIDDMFNFET) are Extracellular-facing. The pore-forming intramembrane region spans 1700–1722 (FGNSMICLFQITTSAGWDGLLAP). At 1723–1752 (ILNSGPPDCDPEKDHPGSSVKGDCGNPSVG) the chain is on the extracellular side. Cysteines 1731 and 1746 form a disulfide. A helical transmembrane segment spans residues 1753–1775 (IFFFVSYIIISFLVVVNMYIAVI). At 1776–2005 (LENFSVATEE…KGKDIRESKK (230 aa)) the chain is on the cytoplasmic side. An IQ domain is found at 1905–1934 (EEVSAIVIQRAYRRYLLKQKVKKVSSIYKK). Ser1930 carries the post-translational modification Phosphoserine. A compositionally biased stretch (basic and acidic residues) spans 1933 to 1964 (KKDKGKEDEGTPIKEDIITDKLNENSTPEKTD). Positions 1933–2005 (KKDKGKEDEG…KGKDIRESKK (73 aa)) are disordered. Residues Thr1943, Thr1963, and Thr1966 each carry the phosphothreonine modification. The residue at position 1971 (Ser1971) is a Phosphoserine. A compositionally biased stretch (basic and acidic residues) spans 1979–2005 (TKPEKEKFEKDKSEKEDKGKDIRESKK).

This sequence belongs to the sodium channel (TC 1.A.1.10) family. Nav1.2/SCN2A subfamily. As to quaternary structure, heterooligomer of a large alpha subunit and a smaller beta subunit. Heterooligomer with SCN2B or SCN4B; disulfide-linked. Heterooligomer with SCN1B or SCN3B; non-covalently linked. Interacts with NEDD4L. Interacts with CALM. Interacts with TMEM233. Interacts with the conotoxin GVIIJ. Interacts with the scorpion toxin BMK M1. May be ubiquitinated by NEDD4L; which would promote its endocytosis. In terms of processing, phosphorylation at Ser-1506 by PKC in a highly conserved cytoplasmic loop slows inactivation of the sodium channel and reduces peak sodium currents. Post-translationally, sumoylated at Lys-38. Sumoylation is induced by hypoxia, increases voltage-gated sodium current and mediates the early response to acute hypoxia in neurons. Sumoylated SCN2A is located at the cell membrane. Expressed in brain (at protein level). Expressed in cerebellar granule neurons (at protein level).

The protein resides in the cell membrane. It carries out the reaction Na(+)(in) = Na(+)(out). Functionally, mediates the voltage-dependent sodium ion permeability of excitable membranes. Assuming opened or closed conformations in response to the voltage difference across the membrane, the protein forms a sodium-selective channel through which Na(+) ions may pass in accordance with their electrochemical gradient. Implicated in the regulation of hippocampal replay occurring within sharp wave ripples (SPW-R) important for memory. The sequence is that of Sodium channel protein type 2 subunit alpha from Rattus norvegicus (Rat).